The chain runs to 415 residues: Gamma-glutamyl phosphate reductase (415 aa).

It belongs to the gamma-glutamyl phosphate reductase family.

Its subcellular location is the cytoplasm. The enzyme catalyses L-glutamate 5-semialdehyde + phosphate + NADP(+) = L-glutamyl 5-phosphate + NADPH + H(+). It functions in the pathway amino-acid biosynthesis; L-proline biosynthesis; L-glutamate 5-semialdehyde from L-glutamate: step 2/2. Functionally, catalyzes the NADPH-dependent reduction of L-glutamate 5-phosphate into L-glutamate 5-semialdehyde and phosphate. The product spontaneously undergoes cyclization to form 1-pyrroline-5-carboxylate. The chain is Gamma-glutamyl phosphate reductase from Thermotoga sp. (strain RQ2).